The sequence spans 300 residues: UDP-N-acetylenolpyruvoylglucosamine reductase (300 aa).

The FAD-binding PCMH-type domain occupies 29-193 (TGGPADLLVF…LSATFKLRSG (165 aa)). R172 is a catalytic residue. S222 acts as the Proton donor in catalysis. E292 is an active-site residue.

Belongs to the MurB family. It depends on FAD as a cofactor.

It localises to the cytoplasm. It catalyses the reaction UDP-N-acetyl-alpha-D-muramate + NADP(+) = UDP-N-acetyl-3-O-(1-carboxyvinyl)-alpha-D-glucosamine + NADPH + H(+). It participates in cell wall biogenesis; peptidoglycan biosynthesis. Functionally, cell wall formation. This Pediococcus pentosaceus (strain ATCC 25745 / CCUG 21536 / LMG 10740 / 183-1w) protein is UDP-N-acetylenolpyruvoylglucosamine reductase.